Reading from the N-terminus, the 853-residue chain is DNA mismatch repair protein MutS (853 aa).

614–621 (GPNMGGKS) is a binding site for ATP.

It belongs to the DNA mismatch repair MutS family.

Its function is as follows. This protein is involved in the repair of mismatches in DNA. It is possible that it carries out the mismatch recognition step. This protein has a weak ATPase activity. The polypeptide is DNA mismatch repair protein MutS (Escherichia coli O6:K15:H31 (strain 536 / UPEC)).